A 153-amino-acid polypeptide reads, in one-letter code: Ribosomal RNA large subunit methyltransferase H (153 aa).

Residues L75, G102, and 121–126 (LSPLTM) contribute to the S-adenosyl-L-methionine site.

It belongs to the RNA methyltransferase RlmH family. Homodimer.

Its subcellular location is the cytoplasm. The catalysed reaction is pseudouridine(1915) in 23S rRNA + S-adenosyl-L-methionine = N(3)-methylpseudouridine(1915) in 23S rRNA + S-adenosyl-L-homocysteine + H(+). In terms of biological role, specifically methylates the pseudouridine at position 1915 (m3Psi1915) in 23S rRNA. The polypeptide is Ribosomal RNA large subunit methyltransferase H (Nitratiruptor sp. (strain SB155-2)).